The following is a 414-amino-acid chain: 3-phosphoshikimate 1-carboxyvinyltransferase (414 aa).

3-phosphoshikimate contacts are provided by Lys20, Ser21, and Arg25. Residue Lys20 coordinates phosphoenolpyruvate. Gly85 and Arg113 together coordinate phosphoenolpyruvate. Positions 154, 155, 156, 181, 296, and 323 each coordinate 3-phosphoshikimate. Gln156 contributes to the phosphoenolpyruvate binding site. Asp296 (proton acceptor) is an active-site residue. The phosphoenolpyruvate site is built by Arg327, Arg371, and Lys395.

It belongs to the EPSP synthase family. As to quaternary structure, monomer.

The protein resides in the cytoplasm. The catalysed reaction is 3-phosphoshikimate + phosphoenolpyruvate = 5-O-(1-carboxyvinyl)-3-phosphoshikimate + phosphate. Its pathway is metabolic intermediate biosynthesis; chorismate biosynthesis. Its function is as follows. Catalyzes the transfer of the enolpyruvyl moiety of phosphoenolpyruvate (PEP) to the 5-hydroxyl of shikimate-3-phosphate (S3P) to produce enolpyruvyl shikimate-3-phosphate and inorganic phosphate. The chain is 3-phosphoshikimate 1-carboxyvinyltransferase from Saccharolobus islandicus (strain M.14.25 / Kamchatka #1) (Sulfolobus islandicus).